The primary structure comprises 298 residues: FH protein interacting protein FIP2 (298 aa).

The region spanning Ser9–Ser80 is the BTB domain. Pentapeptide repeat domains are found at residues Glu129–Arg165, Thr166–Leu203, Ala216–Gly255, and Ala256–Gly295.

As to quaternary structure, interacts with FH1. Expressed in all tissues but preferentially in roots and flowers.

The protein operates within protein modification; protein ubiquitination. May act as a substrate-specific adapter of an E3 ubiquitin-protein ligase complex (CUL3-RBX1-BTB) which mediates the ubiquitination and subsequent proteasomal degradation of target proteins. The protein is FH protein interacting protein FIP2 (FIP2) of Arabidopsis thaliana (Mouse-ear cress).